We begin with the raw amino-acid sequence, 33 residues long: pyr operon leader peptide (33 aa).

The sequence is that of pyr operon leader peptide (pyrL) from Salmonella typhi.